Here is a 154-residue protein sequence, read N- to C-terminus: Protein X (154 aa).

The segment at 68 to 117 (PCALRFTSARRMETTVNAHQVLPKVLHKRTLGLSAMSTTDLEAYFKDCLF) is mitochondrial targeting sequence.

It belongs to the orthohepadnavirus protein X family. In terms of assembly, may form homodimer. May interact with host CEBPA, CFLAR, CREB1, DDB1, E4F1, HBXIP, HSPD1/HSP60, NFKBIA, POLR2E and SMAD4. Interacts with host SMC5-SMC6 complex and induces its degradation. Interacts with host TRPC4AP; leading to prevent ubiquitination of TRPC4AP. Interacts with host PLSCR1; this interaction promotes ubiquitination and degradation of HBx and impairs HBx-mediated cell proliferation. A fraction may be phosphorylated in insect cells and HepG2 cells, a human hepatoblastoma cell line. Phosphorylated in vitro by host protein kinase C or mitogen-activated protein kinase. N-acetylated in insect cells.

Its subcellular location is the host cytoplasm. It localises to the host nucleus. The protein resides in the host mitochondrion. Its function is as follows. Multifunctional protein that plays a role in silencing host antiviral defenses and promoting viral transcription. Does not seem to be essential for HBV infection. May be directly involved in development of cirrhosis and liver cancer (hepatocellular carcinoma). Most of cytosolic activities involve modulation of cytosolic calcium. The effect on apoptosis is controversial depending on the cell types in which the studies have been conducted. May induce apoptosis by localizing in mitochondria and causing loss of mitochondrial membrane potential. May also modulate apoptosis by binding host CFLAR, a key regulator of the death-inducing signaling complex (DISC). Promotes viral transcription by using the host E3 ubiquitin ligase DDB1 to target the SMC5-SMC6 complex to proteasomal degradation. This host complex would otherwise bind to viral episomal DNA, and prevents its transcription. Moderately stimulates transcription of many different viral and cellular transcription elements. Promoters and enhancers stimulated by HBx contain DNA binding sites for NF-kappa-B, AP-1, AP-2, c-EBP, ATF/CREB, or the calcium-activated factor NF-AT. In Hepatitis B virus genotype C subtype adr (isolate Japan/Nishioka/1983) (HBV-C), this protein is Protein X.